We begin with the raw amino-acid sequence, 513 residues long: Acyltransferase uat1 (513 aa).

The Proton acceptor role is filled by histidine 158.

This sequence belongs to the plant acyltransferase family.

It participates in secondary metabolite biosynthesis. Functionally, acyltransferase; part of the gene cluster that mediates the biosynthesis of the glycolipid biosurfactant ustilagic acid (UA). UA is a secreted cellobiose glycolipid that is toxic for many microorganisms and confers biocontrol activity to U.maydis. UA consists of 15,16-dihydroxypalmitic or 2,15,16-trihydroxypalmitic acid, which is O-glycosidically linked to cellobiose at its terminal hydroxyl group. In addition, the cellobiose moiety is acetylated and acylated with a short-chain hydroxy fatty acid. UA biosynthesis starts with omega-hydroxylation of palmitic acid catalyzed by the cytochrome P450 monooxygenase cyp1. Terminal hydroxylation of palmitic acid precedes subterminal hydroxylation catalyzed by the cytochrome P450 monooxygenase cyp2. Sequential glucosylation of the hydroxy fatty acid is probably catalyzed by the glycosyltransferase ugt1. The cellobiose lipid is further decorated by acetylation of the proximal glucose residue and by acylation with a short-chain beta-hydroxy fatty acid at the distal glucose residue. The acyltransferase uat1 may be a good candidate for catalyzing either acetylation or acylation of the cellobiose lipid. The fatty acid synthase fas2 may be involved in synthesis of the carbon backbone of the short-chain beta-hydroxy fatty acid esterified to the cellobiose disaccharide. The secreted UA consists of a mixture of both alpha-hydroxylated and non-hydroxylated glycolipids; therefore, alpha-hydroxylation of the long-chain fatty, catalyzed by the fatty acid hydroxylase ahd1, occurs late in UA biosynthesis and may be the last step before secretion. This chain is Acyltransferase uat1, found in Mycosarcoma maydis (Corn smut fungus).